Here is a 61-residue protein sequence, read N- to C-terminus: Small ribosomal subunit protein uS14 (61 aa).

Residues Cys-24, Cys-27, Cys-40, and Cys-43 each contribute to the Zn(2+) site.

The protein belongs to the universal ribosomal protein uS14 family. Zinc-binding uS14 subfamily. In terms of assembly, part of the 30S ribosomal subunit. Contacts proteins S3 and S10. The cofactor is Zn(2+).

Binds 16S rRNA, required for the assembly of 30S particles and may also be responsible for determining the conformation of the 16S rRNA at the A site. The chain is Small ribosomal subunit protein uS14 from Parafrankia sp. (strain EAN1pec).